The following is a 384-amino-acid chain: 8-amino-7-oxononanoate synthase (384 aa).

Residue arginine 21 participates in substrate binding. Glycine 108–phenylalanine 109 contacts pyridoxal 5'-phosphate. Residue histidine 133 participates in substrate binding. Pyridoxal 5'-phosphate contacts are provided by serine 179, histidine 207, and threonine 233. Lysine 236 carries the N6-(pyridoxal phosphate)lysine modification. Substrate is bound at residue threonine 352.

This sequence belongs to the class-II pyridoxal-phosphate-dependent aminotransferase family. BioF subfamily. As to quaternary structure, homodimer. The cofactor is pyridoxal 5'-phosphate.

The catalysed reaction is 6-carboxyhexanoyl-[ACP] + L-alanine + H(+) = (8S)-8-amino-7-oxononanoate + holo-[ACP] + CO2. It functions in the pathway cofactor biosynthesis; biotin biosynthesis. Functionally, catalyzes the decarboxylative condensation of pimeloyl-[acyl-carrier protein] and L-alanine to produce 8-amino-7-oxononanoate (AON), [acyl-carrier protein], and carbon dioxide. In Shigella sonnei (strain Ss046), this protein is 8-amino-7-oxononanoate synthase.